The primary structure comprises 404 residues: Homocysteine-responsive endoplasmic reticulum-resident ubiquitin-like domain member 2 protein (404 aa).

The 80-residue stretch at 10–89 (VTLIIKAPNQ…HMVHLVCASR (80 aa)) folds into the Ubiquitin-like domain. The interval 86–153 (CASRSPPSSP…TLSQAQTDPA (68 aa)) is disordered. 2 stretches are compositionally biased toward low complexity: residues 88-97 (SRSPPSSPKS) and 109-126 (SSTS…PSPS). The segment covering 127-153 (QESLSLVTGSSEGLRQRTLSQAQTDPA) has biased composition (polar residues). The chain crosses the membrane as a helical span at residues 301-321 (FIMVMGAMLLVYLHQAGWFPF).

Its subcellular location is the membrane. Functionally, could be involved in the unfolded protein response (UPR) pathway. This chain is Homocysteine-responsive endoplasmic reticulum-resident ubiquitin-like domain member 2 protein (Herpud2), found in Mus musculus (Mouse).